The chain runs to 481 residues: Proline--tRNA ligase (481 aa).

This sequence belongs to the class-II aminoacyl-tRNA synthetase family. ProS type 3 subfamily. As to quaternary structure, homodimer.

Its subcellular location is the cytoplasm. The catalysed reaction is tRNA(Pro) + L-proline + ATP = L-prolyl-tRNA(Pro) + AMP + diphosphate. Catalyzes the attachment of proline to tRNA(Pro) in a two-step reaction: proline is first activated by ATP to form Pro-AMP and then transferred to the acceptor end of tRNA(Pro). In Saccharolobus islandicus (strain Y.N.15.51 / Yellowstone #2) (Sulfolobus islandicus), this protein is Proline--tRNA ligase.